A 319-amino-acid chain; its full sequence is Olfactory receptor 8U3 (319 aa).

Topologically, residues 1–25 are extracellular; the sequence is MAEVNISYVSEFILKGITDRPELQA. Asn-5 is a glycosylation site (N-linked (GlcNAc...) asparagine). Residues 26-46 traverse the membrane as a helical segment; the sequence is PCFVMFLTIYLVTVLGNLGLI. Over 47-54 the chain is Cytoplasmic; it reads VIIRVDSR. The chain crosses the membrane as a helical span at residues 55–75; the sequence is LHTPMYFFLSHLAFVDLCYSS. The Extracellular segment spans residues 76 to 99; sequence AITPKMMVNFVVERNTIPFHACAT. Cysteines 97 and 189 form a disulfide. The chain crosses the membrane as a helical span at residues 100–120; that stretch reads QLGCFLTFMITECFLLASMAY. Topologically, residues 121-133 are cytoplasmic; that stretch reads DRYVAICSPLHYS. Residues 134–154 form a helical membrane-spanning segment; that stretch reads TLMSKRVCIQLVAVPYVYSFL. Residues 155–196 lie on the Extracellular side of the membrane; sequence VALFHTIITFRLTYCGPNVINHFYCDDLPLLALSCSDTHMKE. The chain crosses the membrane as a helical span at residues 197-217; sequence ILIFAFAGFDMICSSSIVLTS. Residues 218–237 lie on the Cytoplasmic side of the membrane; the sequence is YLFIIAAILRIRSTQGRRKA. Residues 238 to 258 form a helical membrane-spanning segment; the sequence is ISTCGSHMVAVTIFYGTLIFM. Residues 259 to 271 lie on the Extracellular side of the membrane; the sequence is YLQPKSNHSLDTD. N-linked (GlcNAc...) asparagine glycosylation is present at Asn-265. A helical transmembrane segment spans residues 272-292; that stretch reads KMASVFYTVVIPMLNPLIYSL. The Cytoplasmic portion of the chain corresponds to 293 to 319; it reads RNKEVKDASKKALDKGYETLKILRLSK.

It belongs to the G-protein coupled receptor 1 family.

It is found in the cell membrane. Potential odorant receptor. This chain is Olfactory receptor 8U3, found in Mus musculus (Mouse).